The chain runs to 421 residues: UDP-N-acetylglucosamine 1-carboxyvinyltransferase 2 (421 aa).

22–23 (KN) lines the phosphoenolpyruvate pocket. A UDP-N-acetyl-alpha-D-glucosamine-binding site is contributed by arginine 95. Cysteine 119 serves as the catalytic Proton donor. Cysteine 119 is modified (2-(S-cysteinyl)pyruvic acid O-phosphothioketal). Residues 124 to 128 (RPIEQ), aspartate 308, and valine 330 each bind UDP-N-acetyl-alpha-D-glucosamine.

Belongs to the EPSP synthase family. MurA subfamily.

Its subcellular location is the cytoplasm. The catalysed reaction is phosphoenolpyruvate + UDP-N-acetyl-alpha-D-glucosamine = UDP-N-acetyl-3-O-(1-carboxyvinyl)-alpha-D-glucosamine + phosphate. The protein operates within cell wall biogenesis; peptidoglycan biosynthesis. In terms of biological role, cell wall formation. Adds enolpyruvyl to UDP-N-acetylglucosamine. The sequence is that of UDP-N-acetylglucosamine 1-carboxyvinyltransferase 2 from Staphylococcus haemolyticus (strain JCSC1435).